The primary structure comprises 265 residues: Tryptophan synthase alpha chain (265 aa).

Active-site proton acceptor residues include Glu49 and Asp60.

The protein belongs to the TrpA family. Tetramer of two alpha and two beta chains.

The catalysed reaction is (1S,2R)-1-C-(indol-3-yl)glycerol 3-phosphate + L-serine = D-glyceraldehyde 3-phosphate + L-tryptophan + H2O. It functions in the pathway amino-acid biosynthesis; L-tryptophan biosynthesis; L-tryptophan from chorismate: step 5/5. The alpha subunit is responsible for the aldol cleavage of indoleglycerol phosphate to indole and glyceraldehyde 3-phosphate. This Desulfosudis oleivorans (strain DSM 6200 / JCM 39069 / Hxd3) (Desulfococcus oleovorans) protein is Tryptophan synthase alpha chain.